The sequence spans 2319 residues: A-kinase anchor protein 6 (2319 aa).

Composition is skewed to polar residues over residues 1 to 12 (MLTMSVTLSPLR) and 324 to 339 (GVSSSSGEALTNAAQP). Disordered stretches follow at residues 1-24 (MLTMSVTLSPLRSQDLDPMATDAS), 301-369 (VDDK…NATP), 493-532 (SRLKKPHKTSEEVPPCRTPKRGTGSGKQAKNTKSSAVPNG), 566-614 (LQLQ…PSHV), and 691-757 (TRLG…SATK). The segment covering 340 to 351 (SSETVQQESSSS) has biased composition (low complexity). 2 stretches are compositionally biased toward polar residues: residues 518–532 (GKQAKNTKSSAVPNG) and 566–591 (LQLQSETSSSPAFTQSSESSVGSDNI). Low complexity predominate over residues 697-711 (SPSSSSDIASSLGES). Residues 735 to 754 (KYADEKSERASSSEKNESHS) are compositionally biased toward basic and acidic residues. 2 Spectrin repeats span residues 762–848 (QKLM…QLLE) and 1036–1150 (EKVD…LLDD). Ser1073 bears the Phosphoserine mark. Residues 1250-1272 (KLGETSNEDPGYDEEADNHGGSQ) are disordered. Acidic residues predominate over residues 1255–1265 (SNEDPGYDEEA). Phosphoserine occurs at positions 1570 and 1595. 3 disordered regions span residues 1821-1842 (VSDEMKGSKDISSSEMTNPSDT), 1900-1925 (EGIPERQKGKPNVTSKVSENLGSHGK), and 1963-1983 (KCPNHHHFENQSTASTPTEKS). Polar residues-rich tracts occupy residues 1830 to 1842 (DISSSEMTNPSDT), 1911 to 1920 (NVTSKVSENL), and 1972 to 1982 (NQSTASTPTEK). The PKA-RII subunit binding domain stretch occupies residues 2063 to 2076 (IIDMASTALKSKSQ). A compositionally biased stretch (low complexity) spans 2198 to 2215 (FSDSSLSADDADTVALSS). The segment at 2198 to 2319 (FSDSSLSADD…HEKRHRNMHR (122 aa)) is disordered.

In terms of assembly, interacts with RII subunit of PKA, phosphatase 2B (calcineurin) and AKAP79. Interacts with SYNPO2. Highly expressed in cardiac and skeletal muscle, followed by brain.

The protein resides in the sarcoplasmic reticulum. It is found in the nucleus membrane. Its function is as follows. Binds to type II regulatory subunits of protein kinase A and anchors/targets them to the nuclear membrane or sarcoplasmic reticulum. May act as an adapter for assembling multiprotein complexes. The chain is A-kinase anchor protein 6 (AKAP6) from Homo sapiens (Human).